An 81-amino-acid chain; its full sequence is Sec-independent protein translocase protein TatA (81 aa).

A helical membrane pass occupies residues 1–21; that stretch reads MGGISIWQLLIVALIVILLFG. The disordered stretch occupies residues 34 to 81; sequence GAVKGFKNAMTPEDENKSLDDKEKDQTAATSQQAAEKQPETESKDKQA. 2 stretches are compositionally biased toward basic and acidic residues: residues 47-59 and 70-81; these read DENK…EKDQ and KQPETESKDKQA.

The protein belongs to the TatA/E family. In terms of assembly, the Tat system comprises two distinct complexes: a TatABC complex, containing multiple copies of TatA, TatB and TatC subunits, and a separate TatA complex, containing only TatA subunits. Substrates initially bind to the TatABC complex, which probably triggers association of the separate TatA complex to form the active translocon.

The protein resides in the cell inner membrane. Its function is as follows. Part of the twin-arginine translocation (Tat) system that transports large folded proteins containing a characteristic twin-arginine motif in their signal peptide across membranes. TatA could form the protein-conducting channel of the Tat system. The protein is Sec-independent protein translocase protein TatA of Shewanella frigidimarina (strain NCIMB 400).